We begin with the raw amino-acid sequence, 271 residues long: Aminoglycoside 3'-phosphotransferase (271 aa).

D198 serves as the catalytic Proton acceptor.

This sequence belongs to the aminoglycoside phosphotransferase family.

It catalyses the reaction kanamycin A + ATP = kanamycin 3'-phosphate + ADP + H(+). Functionally, resistance to kanamycin and structurally-related aminoglycosides, including amikacin. This Salmonella typhimurium protein is Aminoglycoside 3'-phosphotransferase.